The primary structure comprises 136 residues: Mitochondrial pyruvate carrier 1-like protein (136 aa).

Topologically, residues 2-19 (ARMAVLWRKMRDNFQSKE) are mitochondrial matrix. A helical membrane pass occupies residues 20–42 (FREYVSSTHFWGPAFSWGLPLAA). At 43–51 (FKDMKASPE) the chain is on the mother cell cytoplasmic side. A helical membrane pass occupies residues 52-74 (IISGRMTTALILYSAIFMRFAYR). At 75-136 (VQPRNLLLMA…PGSQPPKQAS (62 aa)) the chain is on the mitochondrial matrix side. A disordered region spans residues 111–136 (EAKARDPPATAAAATSPGSQPPKQAS). The span at 117 to 136 (PPATAAAATSPGSQPPKQAS) shows a compositional bias: low complexity.

This sequence belongs to the mitochondrial pyruvate carrier (MPC) (TC 2.A.105) family.

Its subcellular location is the mitochondrion inner membrane. The enzyme catalyses pyruvate(out) + H(+)(out) = pyruvate(in) + H(+)(in). Functionally, mediates the uptake of pyruvate into mitochondria. This is Mitochondrial pyruvate carrier 1-like protein (MPC1L) from Homo sapiens (Human).